A 667-amino-acid polypeptide reads, in one-letter code: Long-chain-fatty-acid--CoA ligase ACSBG2 (667 aa).

Residues 1–14 (MTQEKKAEDPDRGM) show a composition bias toward basic and acidic residues. The interval 1-20 (MTQEKKAEDPDRGMDTTSAA) is disordered. Residues 227-235 (TSGTTGSPK), 418-423 (EIYGMT), Asp496, Arg511, and Arg624 each bind ATP.

The protein belongs to the ATP-dependent AMP-binding enzyme family. Bubblegum subfamily.

The protein localises to the cytoplasm. The protein resides in the membrane. The catalysed reaction is a long-chain fatty acid + ATP + CoA = a long-chain fatty acyl-CoA + AMP + diphosphate. The enzyme catalyses (5Z,8Z,11Z,14Z)-eicosatetraenoate + ATP + CoA = (5Z,8Z,11Z,14Z)-eicosatetraenoyl-CoA + AMP + diphosphate. It catalyses the reaction hexadecanoate + ATP + CoA = hexadecanoyl-CoA + AMP + diphosphate. It carries out the reaction (9Z)-octadecenoate + ATP + CoA = (9Z)-octadecenoyl-CoA + AMP + diphosphate. The catalysed reaction is (9Z,12Z)-octadecadienoate + ATP + CoA = (9Z,12Z)-octadecadienoyl-CoA + AMP + diphosphate. The enzyme catalyses tetracosanoate + ATP + CoA = tetracosanoyl-CoA + AMP + diphosphate. Catalyzes the conversion of fatty acids such as long chain and very long-chain fatty acids to their active form acyl-CoAs for both synthesis of cellular lipids, and degradation via beta-oxidation. Can activate diverse saturated, monosaturated and polyunsaturated fatty acids. Has increased ability to activate oleic and linoleic acid. May play a role in spermatogenesis. This chain is Long-chain-fatty-acid--CoA ligase ACSBG2, found in Rattus norvegicus (Rat).